A 179-amino-acid chain; its full sequence is Large ribosomal subunit protein uL6 (179 aa).

It belongs to the universal ribosomal protein uL6 family. In terms of assembly, part of the 50S ribosomal subunit.

This protein binds to the 23S rRNA, and is important in its secondary structure. It is located near the subunit interface in the base of the L7/L12 stalk, and near the tRNA binding site of the peptidyltransferase center. This is Large ribosomal subunit protein uL6 from Fructilactobacillus sanfranciscensis (Lactobacillus sanfranciscensis).